Consider the following 1353-residue polypeptide: Patatin-like phospholipase domain-containing protein ZK370.4 (1353 aa).

A helical transmembrane segment spans residues 12–32 (IFLVTFIYNHVLLILFTVCII). The segment covering 49–64 (TPSSASSSATPSSRNS) has biased composition (low complexity). Disordered regions lie at residues 49–188 (TPSS…STAF) and 199–218 (SRSY…VRPP). The segment covering 91–123 (SPKSGTPTNTQTIEPPTSLNLNMVNSASGSNLS) has biased composition (polar residues). 2 stretches are compositionally biased toward basic residues: residues 126 to 138 (RRMR…KKLY) and 170 to 184 (PRRR…RRRQ). Residues 245-372 (LKML…VITR), 444-581 (FGLV…VLRR), and 570-692 (IYLP…LGQY) contribute to the a nucleoside 3',5'-cyclic phosphate site. Positions 942 to 1108 (LVLGGGGARG…VNNVPADVMR (167 aa)) constitute a PNPLA domain. The short motif at 946–951 (GGGARG) is the GXGXXG element. The GXSXG signature appears at 973–977 (GTSIG). The Nucleophile role is filled by Ser-975. Asp-1095 (proton acceptor) is an active-site residue. The short motif at 1095 to 1097 (DGG) is the DGA/G element. Disordered regions lie at residues 1230-1249 (EKET…PDVS), 1274-1293 (SMSL…DHFL), and 1305-1353 (YEEE…PPSS). Residues 1328-1337 (GPPSSSSSGG) show a composition bias toward low complexity.

This sequence belongs to the NTE family.

It is found in the membrane. This Caenorhabditis elegans protein is Patatin-like phospholipase domain-containing protein ZK370.4.